Here is a 1299-residue protein sequence, read N- to C-terminus: Tubulin polyglutamylase TTLL5 (1299 aa).

Residues 62 to 407 (RYHLSYKIVR…VCQDPAQRAS (346 aa)) enclose the TTL domain. ATP is bound by residues K180, 186–187 (RG), 208–211 (SRYI), and 221–223 (KFD). R186 serves as a coordination point for a protein. R247 contributes to the L-glutamate binding site. 268-269 (TN) serves as a coordination point for ATP. 3 residues coordinate L-glutamate: Y270, S271, and K293. The Mg(2+) site is built by D353, E366, and N368. The segment at 378–488 (PLDLKIKASM…RGGFIRIFPT (111 aa)) is c-MTBD region. K384 provides a ligand contact to L-glutamate. Disordered regions lie at residues 589 to 626 (EMNV…FLRE), 832 to 853 (GTHS…KGDH), 918 to 941 (SSVT…IPSA), 1088 to 1130 (RSSA…RSLQ), and 1217 to 1275 (SSAT…QLNG). Acidic residues predominate over residues 597–617 (ESEEEEEVALDNEEEEQEASQ). The segment covering 838–847 (SKNNNSYSDS) has biased composition (low complexity). 3 stretches are compositionally biased toward polar residues: residues 1104-1130 (SGPT…RSLQ), 1217-1230 (SSAT…TTLP), and 1258-1275 (ATSQ…QLNG).

This sequence belongs to the tubulin--tyrosine ligase family. As to quaternary structure, interacts with the transcriptional coactivators NCOA1/SRC-1 and NCOA2/TIF2. Mg(2+) serves as cofactor.

The protein localises to the cell projection. It localises to the cilium. The protein resides in the cytoplasm. It is found in the cytoskeleton. Its subcellular location is the cilium basal body. The protein localises to the nucleus. It carries out the reaction L-glutamyl-[protein] + L-glutamate + ATP = gamma-L-glutamyl-L-glutamyl-[protein] + ADP + phosphate + H(+). The enzyme catalyses (L-glutamyl)(n)-gamma-L-glutamyl-L-glutamyl-[protein] + L-glutamate + ATP = (L-glutamyl)(n+1)-gamma-L-glutamyl-L-glutamyl-[protein] + ADP + phosphate + H(+). Polyglutamylase which modifies tubulin, generating polyglutamate side chains on the gamma-carboxyl group of specific glutamate residues within the C-terminal tail of tubulin. Preferentially mediates ATP-dependent initiation step of the polyglutamylation reaction over the elongation step. Preferentially modifies the alpha-tubulin tail over a beta-tail. Required for CCSAP localization to both polyglutamylated spindle and cilia microtubules. Increases the effects of transcriptional coactivator NCOA2/TIF2 in glucocorticoid receptor-mediated repression and induction and in androgen receptor-mediated induction. The sequence is that of Tubulin polyglutamylase TTLL5 (TTLL5) from Pongo abelii (Sumatran orangutan).